The following is a 240-amino-acid chain: Cysteine-rich secretory protein (240 aa).

Residues Met-1 to Gly-19 form the signal peptide. Residues Val-38–Tyr-166 enclose the SCP domain. 8 cysteine pairs are disulfide-bonded: Cys-75-Cys-153, Cys-92-Cys-167, Cys-148-Cys-164, Cys-186-Cys-193, Cys-189-Cys-198, Cys-202-Cys-235, Cys-211-Cys-229, and Cys-220-Cys-233. In terms of domain architecture, ShKT spans Cys-202–Cys-235.

Belongs to the CRISP family. Expressed by the venom gland.

It is found in the secreted. In terms of biological role, weakly blocks contraction of smooth muscle elicited by high potassium-induced depolarization, but does not block caffeine-stimulated contraction. May target voltage-gated calcium channels on smooth muscle. In Crotalus adamanteus (Eastern diamondback rattlesnake), this protein is Cysteine-rich secretory protein.